The following is a 663-amino-acid chain: Methionine--tRNA ligase (663 aa).

The 'HIGH' region signature appears at Pro13–His23. 4 residues coordinate Zn(2+): Cys144, Cys147, Cys156, and Cys160. The short motif at Lys326–Ser330 is the 'KMSKS' region element. ATP is bound at residue Lys329. Residues Glu565 to Arg663 enclose the tRNA-binding domain.

It belongs to the class-I aminoacyl-tRNA synthetase family. MetG type 1 subfamily. Homodimer. Zn(2+) serves as cofactor.

It is found in the cytoplasm. It catalyses the reaction tRNA(Met) + L-methionine + ATP = L-methionyl-tRNA(Met) + AMP + diphosphate. Its function is as follows. Is required not only for elongation of protein synthesis but also for the initiation of all mRNA translation through initiator tRNA(fMet) aminoacylation. The sequence is that of Methionine--tRNA ligase from Methanosphaerula palustris (strain ATCC BAA-1556 / DSM 19958 / E1-9c).